Consider the following 328-residue polypeptide: dITP/XTP pyrophosphatase (328 aa).

The interval 1-129 is unknown; that stretch reads MSEKIYEYKD…ATSEQGFGDT (129 aa). Residues 130 to 324 are NTP pyrophosphatase; it reads ILIATRNEGK…KLMEVFPAWQ (195 aa). 134–139 lines the substrate pocket; the sequence is TRNEGK. Asp-196 (proton acceptor) is an active-site residue. Asp-196 is a Mg(2+) binding site. Substrate contacts are provided by residues Ser-197, 280–283, Lys-303, and 308–309; these read FGYD and HR.

It belongs to the HAM1 NTPase family. In terms of assembly, homodimer. Mg(2+) serves as cofactor.

The catalysed reaction is XTP + H2O = XMP + diphosphate + H(+). It carries out the reaction dITP + H2O = dIMP + diphosphate + H(+). The enzyme catalyses ITP + H2O = IMP + diphosphate + H(+). Its function is as follows. Pyrophosphatase that catalyzes the hydrolysis of nucleoside triphosphates to their monophosphate derivatives, with a high preference for the non-canonical purine nucleotides XTP (xanthosine triphosphate), dITP (deoxyinosine triphosphate) and ITP. Seems to function as a house-cleaning enzyme that removes non-canonical purine nucleotides from the nucleotide pool, thus preventing their incorporation into DNA/RNA and avoiding chromosomal lesions. The sequence is that of dITP/XTP pyrophosphatase from Streptococcus pyogenes serotype M6 (strain ATCC BAA-946 / MGAS10394).